Reading from the N-terminus, the 509-residue chain is Transcription factor SOX-9 (509 aa).

Disordered stretches follow at residues 1 to 67 (MNLL…SEED) and 160 to 273 (RLRV…FRDV). Residues 30 to 41 (SAGSPCPSGSGS) are compositionally biased toward low complexity. Polar residues predominate over residues 42 to 52 (DTENTRPQENT). Basic and acidic residues-rich tracts occupy residues 56–67 (GEPDLKKESEED) and 160–174 (RLRVQHKKDHPDYKY). The interval 63-103 (ESEEDKFPVCIREAVSQVLKGYDWTLVPMPVRVNGSSKNKP) is dimerization (DIM). A PQA region spans residues 63–103 (ESEEDKFPVCIREAVSQVLKGYDWTLVPMPVRVNGSSKNKP). Ser-64 carries the phosphoserine modification. Positions 105–173 (VKRPMNAFMV…QHKKDHPDYK (69 aa)) form a DNA-binding region, HMG box. Ser-211 is subject to Phosphoserine. The transactivation domain (TAM) stretch occupies residues 224–307 (PGEHSGQSQG…LPPNGHPGVP (84 aa)). 2 consecutive short sequence motifs (9aaTAD) follow at residues 275 to 284 (IGELSSDVIS) and 290 to 298 (DVNEFDQYL). Positions 334 to 415 (VWMSKQQAPP…HYSEQQQHSP (82 aa)) are disordered. Residues 341 to 376 (APPPPPQQPPQAPPAPQAPPQPQAAPPQQPAAPPQQ) are compositionally biased toward pro residues. Residues 380–415 (HTLTTLSSEPGQSQRTHIKTEQLSPSHYSEQQQHSP) are compositionally biased toward polar residues. The interval 394 to 509 (RTHIKTEQLS…QPVYTQLTRP (116 aa)) is transactivation domain (TAC). Lys-398 participates in a covalent cross-link: Glycyl lysine isopeptide (Lys-Gly) (interchain with G-Cter in ubiquitin). Residues 460–468 (TGLYSTFTY) carry the 9aaTAD 3 motif. The segment at 479 to 509 (PIADTSGVPSIPQTHSPQHWEQPVYTQLTRP) is disordered. Residues 485–509 (GVPSIPQTHSPQHWEQPVYTQLTRP) show a composition bias toward polar residues.

Homodimer; homodimerization is required for activity. Interacts (via C-terminus) with ZNF219; forming a complex that binds to the COL2A1 promoter and activates COL2A1 expression. Interacts with DDRGK1. Interacts with EP300/p300. Interacts with beta-catenin (CTNNB1); inhibiting CTNNB1 activity by competing with the binding sites of TCF/LEF within CTNNB1. Post-translationally, acetylated; acetylation impairs nuclear localization and ability to transactivate expression of target genes. Deacetylated by SIRT1. Phosphorylation at Ser-64 and Ser-211 by PKA increases transcriptional activity and may help delay chondrocyte maturation downstream of PTHLH/PTHrP signaling. Phosphorylation at either Ser-64 or Ser-211 is required for sumoylation, but phosphorylation is not dependent on sumoylation. Phosphorylated on tyrosine residues; tyrosine dephosphorylation by PTPN11/SHP2 blocks SOX9 phosphorylation by PKA and subsequent SUMOylation. In terms of processing, sumoylated; phosphorylation at either Ser-64 or Ser-211 is required for sumoylation. Sumoylation is induced by BMP signaling pathway. Post-translationally, ubiquitinated; ubiquitination leads to proteasomal degradation and is negatively regulated by DDRGK1.

It localises to the nucleus. In terms of biological role, transcription factor that plays a key role in chondrocytes differentiation and skeletal development. Specifically binds the 5'-ACAAAG-3' DNA motif present in enhancers and super-enhancers and promotes expression of genes important for chondrogenesis, including cartilage matrix protein-coding genes COL2A1, COL4A2, COL9A1, COL11A2 and ACAN, SOX5 and SOX6. Also binds to some promoter regions. Plays a central role in successive steps of chondrocyte differentiation. Absolutely required for precartilaginous condensation, the first step in chondrogenesis during which skeletal progenitors differentiate into prechondrocytes. Together with SOX5 and SOX6, required for overt chondrogenesis when condensed prechondrocytes differentiate into early stage chondrocytes, the second step in chondrogenesis. Later, required to direct hypertrophic maturation and block osteoblast differentiation of growth plate chondrocytes: maintains chondrocyte columnar proliferation, delays prehypertrophy and then prevents osteoblastic differentiation of chondrocytes by lowering beta-catenin (CTNNB1) signaling and RUNX2 expression. Also required for chondrocyte hypertrophy, both indirectly, by keeping the lineage fate of chondrocytes, and directly, by remaining present in upper hypertrophic cells and transactivating COL10A1 along with MEF2C. Low lipid levels are the main nutritional determinant for chondrogenic commitment of skeletal progenitor cells: when lipids levels are low, FOXO (FOXO1 and FOXO3) transcription factors promote expression of SOX9, which induces chondrogenic commitment and suppresses fatty acid oxidation. Mechanistically, helps, but is not required, to remove epigenetic signatures of transcriptional repression and deposit active promoter and enhancer marks at chondrocyte-specific genes. Acts in cooperation with the Hedgehog pathway-dependent GLI (GLI1 and GLI3) transcription factors. In addition to cartilage development, also acts as a regulator of proliferation and differentiation in epithelial stem/progenitor cells: involved in the lung epithelium during branching morphogenesis, by balancing proliferation and differentiation and regulating the extracellular matrix. Controls epithelial branching during kidney development. The sequence is that of Transcription factor SOX-9 (SOX9) from Callithrix jacchus (White-tufted-ear marmoset).